Consider the following 133-residue polypeptide: MSVAAAITAGASAAQAGTGLIGSIANAIHEGTRLKLQGQALGAQIKFQEAENKFNRDRFEFDKLNTERWFRLAKEQQSLVYELNTKGPAMRAQAMMDAGFRNNLYSNGNQLTFNEVREAQLSAEKRFYNPSLF.

It belongs to the vesivirus VP2 protein family. As to quaternary structure, homooligomer. The portal-like structure consists in 12 copies of VP2. Interacts with capsid protein VP1.

It localises to the virion. Its subcellular location is the host cytoplasm. Minor structural protein that forms a portal-like structure at a unique three-fold axis of symmetry, following binding to the host receptor. The channel formed by VP2 may allow the delivery of the viral genome through the host endosomal membrane. This Canis lupus familiaris (Dog) protein is Minor capsid protein VP2.